The following is a 400-amino-acid chain: Tryptophan synthase beta chain (400 aa).

An N6-(pyridoxal phosphate)lysine modification is found at Lys-92.

It belongs to the TrpB family. In terms of assembly, tetramer of two alpha and two beta chains. Pyridoxal 5'-phosphate serves as cofactor.

It carries out the reaction (1S,2R)-1-C-(indol-3-yl)glycerol 3-phosphate + L-serine = D-glyceraldehyde 3-phosphate + L-tryptophan + H2O. The protein operates within amino-acid biosynthesis; L-tryptophan biosynthesis; L-tryptophan from chorismate: step 5/5. In terms of biological role, the beta subunit is responsible for the synthesis of L-tryptophan from indole and L-serine. The chain is Tryptophan synthase beta chain from Neisseria gonorrhoeae (strain NCCP11945).